We begin with the raw amino-acid sequence, 370 residues long: tRNA 2-selenouridine synthase (370 aa).

Residues phenylalanine 12–arginine 136 form the Rhodanese domain. Residue cysteine 95 is the S-selanylcysteine intermediate of the active site.

This sequence belongs to the SelU family. Monomer.

The enzyme catalyses 5-methylaminomethyl-2-thiouridine(34) in tRNA + selenophosphate + (2E)-geranyl diphosphate + H2O + H(+) = 5-methylaminomethyl-2-selenouridine(34) in tRNA + (2E)-thiogeraniol + phosphate + diphosphate. The catalysed reaction is 5-methylaminomethyl-2-thiouridine(34) in tRNA + (2E)-geranyl diphosphate = 5-methylaminomethyl-S-(2E)-geranyl-thiouridine(34) in tRNA + diphosphate. It carries out the reaction 5-methylaminomethyl-S-(2E)-geranyl-thiouridine(34) in tRNA + selenophosphate + H(+) = 5-methylaminomethyl-2-(Se-phospho)selenouridine(34) in tRNA + (2E)-thiogeraniol. It catalyses the reaction 5-methylaminomethyl-2-(Se-phospho)selenouridine(34) in tRNA + H2O = 5-methylaminomethyl-2-selenouridine(34) in tRNA + phosphate. In terms of biological role, involved in the post-transcriptional modification of the uridine at the wobble position (U34) of tRNA(Lys), tRNA(Glu) and tRNA(Gln). Catalyzes the conversion of 2-thiouridine (S2U-RNA) to 2-selenouridine (Se2U-RNA). Acts in a two-step process involving geranylation of 2-thiouridine (S2U) to S-geranyl-2-thiouridine (geS2U) and subsequent selenation of the latter derivative to 2-selenouridine (Se2U) in the tRNA chain. The protein is tRNA 2-selenouridine synthase of Azotobacter vinelandii (strain DJ / ATCC BAA-1303).